The sequence spans 201 residues: Recombination protein RecR (201 aa).

The segment at 58–73 (CGRCGALTDVDPCGIC) adopts a C4-type zinc-finger fold. In terms of domain architecture, Toprim spans 81–178 (ETLCLVSEWD…RVTRLAQGIP (98 aa)).

This sequence belongs to the RecR family.

Functionally, may play a role in DNA repair. It seems to be involved in an RecBC-independent recombinational process of DNA repair. It may act with RecF and RecO. The polypeptide is Recombination protein RecR (Nitratidesulfovibrio vulgaris (strain DSM 19637 / Miyazaki F) (Desulfovibrio vulgaris)).